Here is a 232-residue protein sequence, read N- to C-terminus: 2,3,4,5-tetrahydropyridine-2,6-dicarboxylate N-acetyltransferase (232 aa).

It belongs to the transferase hexapeptide repeat family. DapH subfamily.

It carries out the reaction (S)-2,3,4,5-tetrahydrodipicolinate + acetyl-CoA + H2O = L-2-acetamido-6-oxoheptanedioate + CoA. It functions in the pathway amino-acid biosynthesis; L-lysine biosynthesis via DAP pathway; LL-2,6-diaminopimelate from (S)-tetrahydrodipicolinate (acetylase route): step 1/3. Functionally, catalyzes the transfer of an acetyl group from acetyl-CoA to tetrahydrodipicolinate. In Streptococcus sanguinis (strain SK36), this protein is 2,3,4,5-tetrahydropyridine-2,6-dicarboxylate N-acetyltransferase.